We begin with the raw amino-acid sequence, 119 residues long: Ribosome-binding factor A (119 aa).

It belongs to the RbfA family. Monomer. Binds 30S ribosomal subunits, but not 50S ribosomal subunits or 70S ribosomes.

The protein localises to the cytoplasm. Its function is as follows. One of several proteins that assist in the late maturation steps of the functional core of the 30S ribosomal subunit. Associates with free 30S ribosomal subunits (but not with 30S subunits that are part of 70S ribosomes or polysomes). Required for efficient processing of 16S rRNA. May interact with the 5'-terminal helix region of 16S rRNA. This chain is Ribosome-binding factor A, found in Coxiella burnetii (strain CbuK_Q154) (Coxiella burnetii (strain Q154)).